The chain runs to 186 residues: Crossover junction endodeoxyribonuclease RuvC (186 aa).

Residues Asp7, Glu67, and Asp140 contribute to the active site. 3 residues coordinate Mg(2+): Asp7, Glu67, and Asp140.

It belongs to the RuvC family. In terms of assembly, homodimer which binds Holliday junction (HJ) DNA. The HJ becomes 2-fold symmetrical on binding to RuvC with unstacked arms; it has a different conformation from HJ DNA in complex with RuvA. In the full resolvosome a probable DNA-RuvA(4)-RuvB(12)-RuvC(2) complex forms which resolves the HJ. Mg(2+) serves as cofactor.

It is found in the cytoplasm. It carries out the reaction Endonucleolytic cleavage at a junction such as a reciprocal single-stranded crossover between two homologous DNA duplexes (Holliday junction).. Its function is as follows. The RuvA-RuvB-RuvC complex processes Holliday junction (HJ) DNA during genetic recombination and DNA repair. Endonuclease that resolves HJ intermediates. Cleaves cruciform DNA by making single-stranded nicks across the HJ at symmetrical positions within the homologous arms, yielding a 5'-phosphate and a 3'-hydroxyl group; requires a central core of homology in the junction. The consensus cleavage sequence is 5'-(A/T)TT(C/G)-3'. Cleavage occurs on the 3'-side of the TT dinucleotide at the point of strand exchange. HJ branch migration catalyzed by RuvA-RuvB allows RuvC to scan DNA until it finds its consensus sequence, where it cleaves and resolves the cruciform DNA. This Chloroherpeton thalassium (strain ATCC 35110 / GB-78) protein is Crossover junction endodeoxyribonuclease RuvC.